The sequence spans 95 residues: Histone-like DNA-binding protein (95 aa).

It belongs to the bacterial histone-like protein family.

The protein is Histone-like DNA-binding protein of Rickettsia felis (strain ATCC VR-1525 / URRWXCal2) (Rickettsia azadi).